Here is a 239-residue protein sequence, read N- to C-terminus: Endoglucanase A (239 aa).

A signal peptide spans 1–16 (MKLSMTLSLFAATAMG).

This sequence belongs to the glycosyl hydrolase 12 (cellulase H) family.

It carries out the reaction Endohydrolysis of (1-&gt;4)-beta-D-glucosidic linkages in cellulose, lichenin and cereal beta-D-glucans.. Its function is as follows. Has carboxylmethylcellulase activity. This chain is Endoglucanase A (cekA), found in Aspergillus kawachii (strain NBRC 4308) (White koji mold).